A 133-amino-acid chain; its full sequence is Small ribosomal subunit protein uS8 (133 aa).

This sequence belongs to the universal ribosomal protein uS8 family. As to quaternary structure, part of the 30S ribosomal subunit. Contacts proteins S5 and S12.

Its function is as follows. One of the primary rRNA binding proteins, it binds directly to 16S rRNA central domain where it helps coordinate assembly of the platform of the 30S subunit. This is Small ribosomal subunit protein uS8 from Rhodopirellula baltica (strain DSM 10527 / NCIMB 13988 / SH1).